Reading from the N-terminus, the 330-residue chain is Ketol-acid reductoisomerase (NADP(+)) (330 aa).

The region spanning 2–182 (IHVYYDKDAN…GCTKAGVIET (181 aa)) is the KARI N-terminal Rossmann domain. Residues 25-28 (YGSQ), Arg-48, Ser-51, Ser-53, and 83-86 (DEVQ) contribute to the NADP(+) site. His-108 is an active-site residue. Gly-134 contributes to the NADP(+) binding site. Residues 183 to 328 (TFKEETETDL…KKLRDMMPWI (146 aa)) form the KARI C-terminal knotted domain. 4 residues coordinate Mg(2+): Asp-191, Glu-195, Glu-227, and Glu-231. Residue Ser-252 participates in substrate binding.

The protein belongs to the ketol-acid reductoisomerase family. Mg(2+) is required as a cofactor.

It catalyses the reaction (2R)-2,3-dihydroxy-3-methylbutanoate + NADP(+) = (2S)-2-acetolactate + NADPH + H(+). It carries out the reaction (2R,3R)-2,3-dihydroxy-3-methylpentanoate + NADP(+) = (S)-2-ethyl-2-hydroxy-3-oxobutanoate + NADPH + H(+). It functions in the pathway amino-acid biosynthesis; L-isoleucine biosynthesis; L-isoleucine from 2-oxobutanoate: step 2/4. Its pathway is amino-acid biosynthesis; L-valine biosynthesis; L-valine from pyruvate: step 2/4. Functionally, involved in the biosynthesis of branched-chain amino acids (BCAA). Catalyzes an alkyl-migration followed by a ketol-acid reduction of (S)-2-acetolactate (S2AL) to yield (R)-2,3-dihydroxy-isovalerate. In the isomerase reaction, S2AL is rearranged via a Mg-dependent methyl migration to produce 3-hydroxy-3-methyl-2-ketobutyrate (HMKB). In the reductase reaction, this 2-ketoacid undergoes a metal-dependent reduction by NADPH to yield (R)-2,3-dihydroxy-isovalerate. The polypeptide is Ketol-acid reductoisomerase (NADP(+)) (Halothermothrix orenii (strain H 168 / OCM 544 / DSM 9562)).